We begin with the raw amino-acid sequence, 301 residues long: Protoheme IX farnesyltransferase (301 aa).

Transmembrane regions (helical) follow at residues 29-49 (VVALMLLTVLVGMCLAVPGVV), 51-71 (IVPLIAGMAGIGMMAGSAAAF), 96-118 (VSIAKALTFSCSLGILGFVVLYV), 123-143 (LTAWLTFASLIGYAVVYTAYL), 151-171 (IVVGGLAGAMPPLLGWTAVTG), 177-197 (ALLLVIIIFAWTPPHFWALAI), 223-243 (CIFLYTILLAIACLLPVLVGM), 244-264 (CGPVYLVSSTLLSVTFIYKAW), and 281-301 (FSIYHLMLLFIALLVDHYLWL).

It belongs to the UbiA prenyltransferase family. Protoheme IX farnesyltransferase subfamily.

The protein localises to the cell inner membrane. The enzyme catalyses heme b + (2E,6E)-farnesyl diphosphate + H2O = Fe(II)-heme o + diphosphate. The protein operates within porphyrin-containing compound metabolism; heme O biosynthesis; heme O from protoheme: step 1/1. Converts heme B (protoheme IX) to heme O by substitution of the vinyl group on carbon 2 of heme B porphyrin ring with a hydroxyethyl farnesyl side group. This chain is Protoheme IX farnesyltransferase, found in Shewanella halifaxensis (strain HAW-EB4).